The sequence spans 256 residues: Imidazole glycerol phosphate synthase subunit HisF (256 aa).

Residues D13 and D132 contribute to the active site.

Belongs to the HisA/HisF family. In terms of assembly, heterodimer of HisH and HisF.

It localises to the cytoplasm. The enzyme catalyses 5-[(5-phospho-1-deoxy-D-ribulos-1-ylimino)methylamino]-1-(5-phospho-beta-D-ribosyl)imidazole-4-carboxamide + L-glutamine = D-erythro-1-(imidazol-4-yl)glycerol 3-phosphate + 5-amino-1-(5-phospho-beta-D-ribosyl)imidazole-4-carboxamide + L-glutamate + H(+). It functions in the pathway amino-acid biosynthesis; L-histidine biosynthesis; L-histidine from 5-phospho-alpha-D-ribose 1-diphosphate: step 5/9. In terms of biological role, IGPS catalyzes the conversion of PRFAR and glutamine to IGP, AICAR and glutamate. The HisF subunit catalyzes the cyclization activity that produces IGP and AICAR from PRFAR using the ammonia provided by the HisH subunit. The chain is Imidazole glycerol phosphate synthase subunit HisF from Leptospira interrogans serogroup Icterohaemorrhagiae serovar copenhageni (strain Fiocruz L1-130).